Consider the following 329-residue polypeptide: GTPase Obg (329 aa).

The region spanning 1 to 159 is the Obg domain; that stretch reads MQFIDQACIS…WLLHLELKLL (159 aa). The OBG-type G domain occupies 160-328; sequence AEVGIIGLPN…LLKNVWEKLE (169 aa). ATP contacts are provided by residues 166 to 173, 191 to 195, 213 to 216, 280 to 283, and 309 to 311; these read GLPNAGKS, FTTLI, DIPG, NKKE, and SAA. Positions 173 and 193 each coordinate Mg(2+).

This sequence belongs to the TRAFAC class OBG-HflX-like GTPase superfamily. OBG GTPase family. Monomer. The cofactor is Mg(2+).

Its subcellular location is the cytoplasm. Its function is as follows. An essential GTPase which binds GTP, GDP and possibly (p)ppGpp with moderate affinity, with high nucleotide exchange rates and a fairly low GTP hydrolysis rate. Plays a role in control of the cell cycle, stress response, ribosome biogenesis and in those bacteria that undergo differentiation, in morphogenesis control. In Prochlorococcus marinus (strain MIT 9211), this protein is GTPase Obg.